Here is a 565-residue protein sequence, read N- to C-terminus: Membrane protein insertase YidC (565 aa).

6 helical membrane-spanning segments follow: residues 6–26, 348–368, 370–390, 437–457, 479–499, and 516–536; these read VLLI…WGKN, LMAL…SLLH, WGWA…PLSA, GGCF…WVLV, PYFI…KLTP, and PLIF…YWVI.

This sequence belongs to the OXA1/ALB3/YidC family. Type 1 subfamily. Interacts with the Sec translocase complex via SecD. Specifically interacts with transmembrane segments of nascent integral membrane proteins during membrane integration.

The protein localises to the cell inner membrane. Its function is as follows. Required for the insertion and/or proper folding and/or complex formation of integral membrane proteins into the membrane. Involved in integration of membrane proteins that insert both dependently and independently of the Sec translocase complex, as well as at least some lipoproteins. Aids folding of multispanning membrane proteins. The polypeptide is Membrane protein insertase YidC (Xylella fastidiosa (strain M12)).